The primary structure comprises 261 residues: Carbonic anhydrase 1 (261 aa).

Positions 1–40 are disordered; sequence MASPDWGYDDKNGPEQWSKLYPIANGNNQSPVDIKTSETK. Ala-2 carries the N-acetylalanine modification. Residues 4–261 form the Alpha-carbonic anhydrase domain; it reads PDWGYDDKNG…LKGRTVRASF (258 aa). His-65 serves as the catalytic Proton donor/acceptor. Residues His-95, His-97, and His-120 each contribute to the Zn(2+) site. Residues Thr-200 and 200 to 201 each bind substrate; that span reads TH. Positions 241–261 are disordered; sequence PMQHNNRPTQPLKGRTVRASF.

The protein belongs to the alpha-carbonic anhydrase family. It depends on Zn(2+) as a cofactor.

Its subcellular location is the cytoplasm. The catalysed reaction is hydrogencarbonate + H(+) = CO2 + H2O. It carries out the reaction urea = cyanamide + H2O. Inhibited by acetazolamide. In terms of biological role, catalyzes the reversible hydration of carbon dioxide. Can hydrate cyanamide to urea. The protein is Carbonic anhydrase 1 (CA1) of Pan troglodytes (Chimpanzee).